The primary structure comprises 268 residues: Homeobox protein Hox-C4a (268 aa).

A disordered region spans residues P70–K129. Low complexity-rich tracts occupy residues G77–C95 and A105–C114. A compositionally biased stretch (polar residues) spans N115–A128. Residues V133–K138 carry the Antp-type hexapeptide motif. The segment at residues P154–H213 is a DNA-binding region (homeobox). A disordered region spans residues D212–L268. Positions S222–S253 are enriched in low complexity. Residues G258–L268 show a composition bias toward basic and acidic residues.

This sequence belongs to the Antp homeobox family. Deformed subfamily.

The protein resides in the nucleus. In terms of biological role, sequence-specific transcription factor which is part of a developmental regulatory system that provides cells with specific positional identities on the anterior-posterior axis. The protein is Homeobox protein Hox-C4a (hoxc4a) of Danio rerio (Zebrafish).